A 597-amino-acid chain; its full sequence is Aspartate--tRNA(Asp/Asn) ligase (597 aa).

E175 provides a ligand contact to L-aspartate. The tract at residues 199–202 (QQYK) is aspartate. L-aspartate-binding residues include R221 and H454. Residue 221–223 (RDE) coordinates ATP. E488 contacts ATP. R495 contributes to the L-aspartate binding site. 540–543 (GIDR) is an ATP binding site.

This sequence belongs to the class-II aminoacyl-tRNA synthetase family. Type 1 subfamily. In terms of assembly, homodimer.

It is found in the cytoplasm. It catalyses the reaction tRNA(Asx) + L-aspartate + ATP = L-aspartyl-tRNA(Asx) + AMP + diphosphate. Aspartyl-tRNA synthetase with relaxed tRNA specificity since it is able to aspartylate not only its cognate tRNA(Asp) but also tRNA(Asn). Reaction proceeds in two steps: L-aspartate is first activated by ATP to form Asp-AMP and then transferred to the acceptor end of tRNA(Asp/Asn). This Bartonella tribocorum (strain CIP 105476 / IBS 506) protein is Aspartate--tRNA(Asp/Asn) ligase.